A 541-amino-acid chain; its full sequence is Chaperonin GroEL (541 aa).

Residues 29 to 32 (TLGP), 86 to 90 (DGTTT), Gly413, 478 to 480 (NAL), and Asp494 each bind ATP.

Belongs to the chaperonin (HSP60) family. In terms of assembly, forms a cylinder of 14 subunits composed of two heptameric rings stacked back-to-back. Interacts with the co-chaperonin GroES.

The protein localises to the cytoplasm. It carries out the reaction ATP + H2O + a folded polypeptide = ADP + phosphate + an unfolded polypeptide.. Functionally, together with its co-chaperonin GroES, plays an essential role in assisting protein folding. The GroEL-GroES system forms a nano-cage that allows encapsulation of the non-native substrate proteins and provides a physical environment optimized to promote and accelerate protein folding. This chain is Chaperonin GroEL, found in Lachnoclostridium phytofermentans (strain ATCC 700394 / DSM 18823 / ISDg) (Clostridium phytofermentans).